We begin with the raw amino-acid sequence, 450 residues long: Glucose-6-phosphate isomerase (450 aa).

The active-site Proton donor is the E291. Catalysis depends on residues H312 and K426.

Belongs to the GPI family.

The protein localises to the cytoplasm. It catalyses the reaction alpha-D-glucose 6-phosphate = beta-D-fructose 6-phosphate. The protein operates within carbohydrate biosynthesis; gluconeogenesis. It functions in the pathway carbohydrate degradation; glycolysis; D-glyceraldehyde 3-phosphate and glycerone phosphate from D-glucose: step 2/4. Functionally, catalyzes the reversible isomerization of glucose-6-phosphate to fructose-6-phosphate. In Clostridium botulinum (strain Loch Maree / Type A3), this protein is Glucose-6-phosphate isomerase.